The following is a 165-amino-acid chain: Transcriptional repressor NrdR (165 aa).

The segment at 3–34 (CPFCRNPDSRVVDSRMADDGSAIRRRRQCPEC) is a zinc-finger region. The region spanning 46-136 (LTVIKRSGVG…VYQAFESLED (91 aa)) is the ATP-cone domain.

This sequence belongs to the NrdR family. The cofactor is Zn(2+).

In terms of biological role, negatively regulates transcription of bacterial ribonucleotide reductase nrd genes and operons by binding to NrdR-boxes. The sequence is that of Transcriptional repressor NrdR from Arthrobacter sp. (strain FB24).